The following is a 1489-amino-acid chain: Chromosome partition protein MukB (1489 aa).

34-41 (GGNGAGKS) contributes to the ATP binding site. Coiled coils occupy residues 326-418 (LEAD…QYNQ), 444-472 (LETF…QTAH), 509-602 (RHLA…QRAP), 780-805 (RAAR…ATLS), 835-919 (EAEI…GNQL), 977-1116 (EMLS…AKAG), and 1209-1266 (VEAI…QNVS). Positions 666 to 783 (PGGSEDSRLN…TVPIFGRAAR (118 aa)) are flexible hinge.

This sequence belongs to the SMC family. MukB subfamily. In terms of assembly, homodimerization via its hinge domain. Binds to DNA via its C-terminal region. Interacts, and probably forms a ternary complex, with MukE and MukF via its C-terminal region. The complex formation is stimulated by calcium or magnesium. Interacts with tubulin-related protein FtsZ.

The protein resides in the cytoplasm. It is found in the nucleoid. Its function is as follows. Plays a central role in chromosome condensation, segregation and cell cycle progression. Functions as a homodimer, which is essential for chromosome partition. Involved in negative DNA supercoiling in vivo, and by this means organize and compact chromosomes. May achieve or facilitate chromosome segregation by condensation DNA from both sides of a centrally located replisome during cell division. The chain is Chromosome partition protein MukB from Citrobacter koseri (strain ATCC BAA-895 / CDC 4225-83 / SGSC4696).